The sequence spans 122 residues: ATP-dependent Clp protease adapter protein ClpS (122 aa).

The tract at residues 1 to 33 (MHAPSQIRLTFNQDHPEPHEHEDEGAGLAVQES) is disordered. Over residues 14-24 (DHPEPHEHEDE) the composition is skewed to basic and acidic residues.

This sequence belongs to the ClpS family. Binds to the N-terminal domain of the chaperone ClpA.

Functionally, involved in the modulation of the specificity of the ClpAP-mediated ATP-dependent protein degradation. This Pseudomonas aeruginosa (strain ATCC 15692 / DSM 22644 / CIP 104116 / JCM 14847 / LMG 12228 / 1C / PRS 101 / PAO1) protein is ATP-dependent Clp protease adapter protein ClpS.